We begin with the raw amino-acid sequence, 137 residues long: Large ribosomal subunit protein uL16 (137 aa).

It belongs to the universal ribosomal protein uL16 family. In terms of assembly, part of the 50S ribosomal subunit.

In terms of biological role, binds 23S rRNA and is also seen to make contacts with the A and possibly P site tRNAs. This Francisella tularensis subsp. holarctica (strain FTNF002-00 / FTA) protein is Large ribosomal subunit protein uL16.